Reading from the N-terminus, the 219-residue chain is NADH-quinone oxidoreductase subunit C (219 aa).

Belongs to the complex I 30 kDa subunit family. NDH-1 is composed of 14 different subunits. Subunits NuoB, C, D, E, F, and G constitute the peripheral sector of the complex.

The protein localises to the cell inner membrane. It carries out the reaction a quinone + NADH + 5 H(+)(in) = a quinol + NAD(+) + 4 H(+)(out). NDH-1 shuttles electrons from NADH, via FMN and iron-sulfur (Fe-S) centers, to quinones in the respiratory chain. The immediate electron acceptor for the enzyme in this species is believed to be ubiquinone. Couples the redox reaction to proton translocation (for every two electrons transferred, four hydrogen ions are translocated across the cytoplasmic membrane), and thus conserves the redox energy in a proton gradient. This is NADH-quinone oxidoreductase subunit C from Methylorubrum populi (strain ATCC BAA-705 / NCIMB 13946 / BJ001) (Methylobacterium populi).